The chain runs to 608 residues: Protein FAM151A (608 aa).

The chain crosses the membrane as a helical span at residues 14–34 (WILAGSVSMTLVLAISMILGL). The segment at 588-608 (RHRPSSRTGPSYVEGFPGESR) is disordered.

It belongs to the menorin family.

It localises to the membrane. The polypeptide is Protein FAM151A (Fam151a) (Rattus norvegicus (Rat)).